The following is an 891-amino-acid chain: uncharacterized protein (891 aa).

Over residues 48–64 (GHKKPRSESRKKYDAKK) the composition is skewed to basic and acidic residues. Residues 48–86 (GHKKPRSESRKKYDAKKQHQSSHFATPVKGVESSEPTEK) are disordered. Residues S261, S263, S265, and S268 each carry the phosphoserine modification. The disordered stretch occupies residues 795–822 (QRTFSNESPRAVDSGFSRTSTPFSESTS). Residues 810-822 (FSRTSTPFSESTS) show a composition bias toward polar residues.

The protein localises to the nucleus. This is an uncharacterized protein from Schizosaccharomyces pombe (strain 972 / ATCC 24843) (Fission yeast).